Reading from the N-terminus, the 307-residue chain is Zinc transporter ZIP9 (307 aa).

The chain crosses the membrane as a helical span at residues 4 to 24 (FISISLLSLAMLVGCYVAGII). An N-linked (GlcNAc...) asparagine glycan is attached at Asn29. Transmembrane regions (helical) follow at residues 35–55 (LKLV…AVIV), 106–126 (AYIG…DQIG), 146–166 (ITTT…LGAA), 176–196 (LIVF…LVSF), and 210–230 (HLLV…LGLS). An N-linked (GlcNAc...) asparagine glycan is attached at Asn241. 2 helical membrane passes run 244–264 (GVAM…HVLP) and 286–306 (LEVA…VGHQ).

Belongs to the ZIP transporter (TC 2.A.5) family. As to expression, highly expressed in pancreas, testis, and pituitary and moderately in the kidney, liver, uterus, heart, prostate, and brain, whereas expression is lower in the ovary and colon.

Its subcellular location is the golgi apparatus. The protein localises to the trans-Golgi network membrane. The protein resides in the cell membrane. It localises to the cytoplasm. It is found in the perinuclear region. Its subcellular location is the mitochondrion. The protein localises to the nucleus. It carries out the reaction Zn(2+)(in) = Zn(2+)(out). Its function is as follows. Transports zinc ions across cell and organelle membranes into the cytoplasm and regulates intracellular zinc homeostasis. Participates in the zinc ions efflux out of the secretory compartments. Regulates intracellular zinc level, resulting in the enhancement of AKT1 and MAPK3/MAPK1 (Erk1/2) phosphorylation in response to the BCR activation. Also functions as a membrane androgen receptor that mediates, through a G protein, the non-classical androgen signaling pathway, characterized by the activation of MAPK3/MAPK1 (Erk1/2) and transcription factors CREB1 or ATF1. This pathway contributes to CLDN1 and CLDN5 expression and tight junction formation between adjacent Sertoli cells. Mediates androgen-induced vascular endothelial cell proliferation through activation of an inhibitory G protein leading to the AKT1 and MAPK3/MAPK1 (Erk1/2) activation which in turn modulate inhibition (phosphorylation) of GSK3B and CCND1 transcription. Moreover, has dual functions as a membrane-bound androgen receptor and as an androgen-dependent zinc transporter both of which are mediated through an inhibitory G protein (Gi) that mediates both MAP kinase and zinc signaling leading to the androgen-dependent apoptotic process. The polypeptide is Zinc transporter ZIP9 (Homo sapiens (Human)).